An 868-amino-acid chain; its full sequence is Thiol protease/hemagglutinin PrtT (868 aa).

Residues 1 to 27 (MKRIFYTLGLLLLCLPMLQAGPVTRSK) form the signal peptide. Active-site residues include cysteine 184 and histidine 327.

It belongs to the peptidase C10 family.

Its function is as follows. Appears to be specific for arginine-containing peptide bonds. Possesses hemagglutinin activity. This chain is Thiol protease/hemagglutinin PrtT (prtT), found in Porphyromonas gingivalis (Bacteroides gingivalis).